The sequence spans 344 residues: Nuclear distribution protein nudE homolog 1 (344 aa).

The interval 1–93 is self-association; sequence MEDSGKTFGS…MQHSEGYRQI (93 aa). A coiled-coil region spans residues 18 to 188; that stretch reads WRDLAMTYKQ…ELAVQQKQDK (171 aa). The segment covering 30–47 has biased composition (basic and acidic residues); it reads ENTQEELREFQEGSREYE. Positions 30–65 are disordered; the sequence is ENTQEELREFQEGSREYEAELETQLQQAETRNRDLL. The segment at 88–156 is interaction with PAFAH1B1; it reads EGYRQISALE…ERNAFLESEL (69 aa). Residues 167–290 form an interaction with CENPF region; it reads QRLKDEARDL…QSPSRKSGPA (124 aa). The tract at residues 181-243 is disordered; the sequence is AVQQKQDKPR…CGLGSPSSGT (63 aa). Residues 208 to 230 are compositionally biased toward polar residues; sequence ATGSAPSTPITHQGSSSGLNTPE. Ser-211 is subject to Phosphoserine. Residues Thr-215, Thr-228, Thr-243, and Thr-246 each carry the phosphothreonine modification. Cys-274 carries S-palmitoyl cysteine; by ZDHHC2, ZDHHC3 and ZDHHC7 lipidation. The tract at residues 279–337 is disordered; the sequence is YDQSPSRKSGPALGRGTKNRDGIDRRPGSTAVGDKGSGKRLEFAKPSSQLSSPALPSTQ. Ser-282 carries the phosphoserine modification. A compositionally biased stretch (basic and acidic residues) spans 296 to 305; it reads KNRDGIDRRP. Residues 324–335 show a composition bias toward low complexity; that stretch reads PSSQLSSPALPS.

Belongs to the nudE family. As to quaternary structure, homodimer. Interacts with CNTRL, LIS1, dynein, SLMAP and TCP1. Interacts with CENPF, dynactin, tubulin gamma, PAFAH1B1, PCM1 and PCNT. Interacts with ZNF365. Interacts with GTP-bound RAB9A and RAB9B; the interaction leads to RAB9-dynein motor tethering. Interacts (via C-terminus) with MCRS1 (via C-terminus); phosphorylation of NDE1 inhibits the interaction. Phosphorylated in mitosis. Phosphorylation at Thr-246 is essential for the G2/M transition. Expressed in brain, heart, kidney, liver, lung, skeletal muscle, spleen and testis.

The protein resides in the cytoplasm. The protein localises to the cytoskeleton. It is found in the microtubule organizing center. Its subcellular location is the centrosome. It localises to the spindle. The protein resides in the chromosome. The protein localises to the centromere. It is found in the kinetochore. Its subcellular location is the cleavage furrow. It localises to the cytoplasmic vesicle membrane. Its function is as follows. Required for centrosome duplication and formation and function of the mitotic spindle. Essential for the development of the cerebral cortex. May regulate the production of neurons by controlling the orientation of the mitotic spindle during division of cortical neuronal progenitors of the proliferative ventricular zone of the brain. Orientation of the division plane perpendicular to the layers of the cortex gives rise to two proliferative neuronal progenitors whereas parallel orientation of the division plane yields one proliferative neuronal progenitor and a postmitotic neuron. A premature shift towards a neuronal fate within the progenitor population may result in an overall reduction in the final number of neurons and an increase in the number of neurons in the deeper layers of the cortex. Acts as a RAB9A/B effector that tethers RAB9-associated late endosomes to the dynein motor for their retrograde transport to the trans-Golgi network. This Rattus norvegicus (Rat) protein is Nuclear distribution protein nudE homolog 1.